The sequence spans 164 residues: Prolyl-tRNA editing protein ProX (164 aa).

This sequence belongs to the PRORSD1 family.

The protein resides in the cytoplasm. Functions in trans to edit the amino acid moiety from incorrectly charged Ala-tRNA(Pro). Has weak activity on correctly charged tRNA(Ala), tRNA(Gly) as well as tRNA(Cys), tRNA(Met), tRNA(Pro), tRNA(Ser) and tRNA(Leu). The polypeptide is Prolyl-tRNA editing protein ProX (proX) (Acetoanaerobium sticklandii (strain ATCC 12662 / DSM 519 / JCM 1433 / CCUG 9281 / NCIMB 10654 / HF) (Clostridium sticklandii)).